The chain runs to 366 residues: Beta sliding clamp (366 aa).

Belongs to the beta sliding clamp family. In terms of assembly, forms a ring-shaped head-to-tail homodimer around DNA which binds and tethers DNA polymerases and other proteins to the DNA. The DNA replisome complex has a single clamp-loading complex (3 tau and 1 each of delta, delta', psi and chi subunits) which binds 3 Pol III cores (1 core on the leading strand and 2 on the lagging strand) each with a beta sliding clamp dimer. Additional proteins in the replisome are other copies of gamma, psi and chi, Ssb, DNA helicase and RNA primase.

It localises to the cytoplasm. Functionally, confers DNA tethering and processivity to DNA polymerases and other proteins. Acts as a clamp, forming a ring around DNA (a reaction catalyzed by the clamp-loading complex) which diffuses in an ATP-independent manner freely and bidirectionally along dsDNA. Initially characterized for its ability to contact the catalytic subunit of DNA polymerase III (Pol III), a complex, multichain enzyme responsible for most of the replicative synthesis in bacteria; Pol III exhibits 3'-5' exonuclease proofreading activity. The beta chain is required for initiation of replication as well as for processivity of DNA replication. This chain is Beta sliding clamp (dnaN), found in Buchnera aphidicola subsp. Rhopalosiphum padi.